We begin with the raw amino-acid sequence, 187 residues long: High affinity copper uptake protein 1 (187 aa).

Over 1 to 65 (MRMNHMEMHH…SSLVINTPGE (65 aa)) the chain is Extracellular. The Bis-His motif motif lies at 9–10 (HH). An N-linked (GlcNAc...) asparagine glycan is attached at Asn19. O-linked (GalNAc...) threonine glycosylation is present at Thr30. The helical transmembrane segment at 66-86 (MAGAFVAVFLLAMFYEGLKIA) threads the bilayer. Over 87-129 (REGLLRKSQVSIRYNSMPVPGPNGTILMETHKTVGQQMLSFPH) the chain is Cytoplasmic. Position 111 is a phosphothreonine (Thr111). Residues 130-150 (LLQTVLHIIQVVISYFLMLIF) traverse the membrane as a helical segment. Topologically, residues 151–153 (MTY) are extracellular. A helical membrane pass occupies residues 154–174 (NGYLCIAVAAGAGTGYFLFSW). Over 175–187 (KKAVVVDITEHCH) the chain is Cytoplasmic. Cys186 carries the cysteine sulfenic acid (-SOH) modification.

It belongs to the copper transporter (Ctr) (TC 1.A.56) family. SLC31A subfamily. As to quaternary structure, homotrimer; is stabilized by cisplatin via interactions between cisplatin and the methionine-rich clusters, and could be crucial for the copper(2+) reduction process and copper(1+) stabilization. Heterotrimer between SLC31A1, CCS and SOD1; this heterotrimer is copper(1+)-mediated and its maintenance is regulated through SOD1 activation. Interacts with KDR; this interaction is induced upon VEGFA stimulation leading to SLC31A1 and KDR subsequent co-internalization to early endosomes, thereby activating KDR downstream signaling in endothelial cells. Interacts (via C-terminal domain) with ATOX1 (via dimer form); this interaction improves ATOX1 stability and controls intracellular copper(1+) levels. Interacts with SLC31A2; this interaction stabilizes SLC31A2 and protects its from ubiquitination and degradation. Interacts (via C-terminal domain) with CCS; this interaction is copper(1+)-mediated. Post-translationally, O-Glycosylation at Thr-30 protects from proteolytic cleavage in the N-terminal extracellular domain. In terms of processing, proteolytic cleavage, leading to a truncated form, is facilitated by SLC31A2 and initiated preferentially by CTSL and to a minor extend by CTSB in endolysosomal compartments. A post-CTSL/cathepsin L processing occurs to yield to the fully truncated form. Sulfenylated at Cys-186 after stimulation with VEGFA, which induces SLC31A1-KDR disulfide bond formation and their co-internalization to early endosomes, driving to a sustained VEGFR2 signaling.

It localises to the cell membrane. The protein resides in the early endosome membrane. It is found in the recycling endosome membrane. Its subcellular location is the apical cell membrane. The protein localises to the late endosome membrane. It localises to the basolateral cell membrane. The enzyme catalyses Cu(+)(out) = Cu(+)(in). It catalyses the reaction Ag(+)(out) = Ag(+)(in). With respect to regulation, copper uptake is inhibited by cold temperature, silver and zinc ions. Platinum-containing chemotherapeutic agents uptake is inhibited by cold temperature and copper. In terms of biological role, uniporter that mediates the transport of copper(1+) from the extracellular space to the cytoplasm, across the plasma membrane. Then, delivers directly copper(1+) to specific chaperone such as ATOX1, via a copper(1+)- mediated transient interaction between the C-terminal domain and a copper(1+) chaperone, thus controlling intracellular copper(1+) levels. May function in copper(1+) import from the apical membrane thus may drive intestinal copper absorption. The copper(1+) transport mechanism is sodium-independent, saturable and of high-affinity. Also mediates the uptake of silver(1+). May function in the influx of the platinum-containing chemotherapeutic agents. The platinum-containing chemotherapeutic agents uptake is saturable. Also participates in the first step of copper(2+) acquisition by cells through a direct transfer of copper(2+) from copper(2+) carriers in blood, such as ALB to the N-terminal domain of SLC31A1, leading to copper(2+) reduction and probably followed by copper(1+) stabilization. In addition, functions as a redox sensor to promote angiogenesis in endothelial cells, in a copper(1+) transport independent manner, by transmitting the VEGF-induced ROS signal through a sulfenylation at Cys-189 leading to a subsequent disulfide bond formation between SLC31A1 and KDR. The SLC31A1-KDR complex is then co-internalized to early endosomes, driving a sustained VEGFR2 signaling. Mobilizes copper(1+) out of the endosomal compartment, making copper(1+) available for export out of the cells. This chain is High affinity copper uptake protein 1, found in Rattus norvegicus (Rat).